We begin with the raw amino-acid sequence, 361 residues long: GDP-mannose 4,6 dehydratase 1 (361 aa).

Residues 23–28 (GITGQD), 79–80 (DL), 101–105 (LAAQS), and Y116 contribute to the NADP(+) site. The active site involves S150. Catalysis depends on nucleophile residues E152 and Y173. Positions 177, 203, and 208 each coordinate NADP(+).

The protein belongs to the NAD(P)-dependent epimerase/dehydratase family. GDP-mannose 4,6-dehydratase subfamily. Homotetramer. The cofactor is NADP(+). In terms of tissue distribution, expressed in roots,stipules and pollen just before anthesis. Primarily localized to the root meristem and columella root cap. Not expressed in emerging lateral roots.

It catalyses the reaction GDP-alpha-D-mannose = GDP-4-dehydro-alpha-D-rhamnose + H2O. Its pathway is nucleotide-sugar biosynthesis; GDP-L-fucose biosynthesis via de novo pathway; GDP-L-fucose from GDP-alpha-D-mannose: step 1/2. Functionally, catalyzes the conversion of GDP-D-mannose to GDP-4-dehydro-6-deoxy-D-mannose. The polypeptide is GDP-mannose 4,6 dehydratase 1 (GMD1) (Arabidopsis thaliana (Mouse-ear cress)).